The primary structure comprises 256 residues: Diaminopimelate epimerase (256 aa).

Residues Asn-11 and Asn-63 each coordinate substrate. The active-site Proton donor is the Cys-72. Substrate-binding positions include 73–74 (GN), Asn-169, and 187–188 (ER). Cys-197 functions as the Proton acceptor in the catalytic mechanism. 198–199 (GT) serves as a coordination point for substrate.

The protein belongs to the diaminopimelate epimerase family. In terms of assembly, homodimer.

It is found in the cytoplasm. It catalyses the reaction (2S,6S)-2,6-diaminopimelate = meso-2,6-diaminopimelate. The protein operates within amino-acid biosynthesis; L-lysine biosynthesis via DAP pathway; DL-2,6-diaminopimelate from LL-2,6-diaminopimelate: step 1/1. Its function is as follows. Catalyzes the stereoinversion of LL-2,6-diaminopimelate (L,L-DAP) to meso-diaminopimelate (meso-DAP), a precursor of L-lysine and an essential component of the bacterial peptidoglycan. The protein is Diaminopimelate epimerase of Flavobacterium psychrophilum (strain ATCC 49511 / DSM 21280 / CIP 103535 / JIP02/86).